The following is a 1038-amino-acid chain: MTSSLHRPFRVPWLLWAVLLVSTTAASQNQERLCAFKDPYQQDLGIGESRISHENGTILCSKGSTCYGLWEKSKGDINLVKQGCWSHIGDPQECHYEECVVTTTPPSIQNGTYRFCCCSTDLCNVNFTENFPPPDTTPLSPPHSFNRDETIIIALASVSVLAVLIVALCFGYRMLTGDRKQGLHSMNMMEAAAAEPSLDLDNLKLLELIGRGRYGAVYKGSLDERPVAVKVFSFANRQNFINEKNIYRVPLMEHDNIARFIVGDERLTADGRMEYLLVMEYYPNGSLCKYLSLHTSDWVSSCRLAHSVTRGLAYLHTELPRGDHYKPAISHRDLNSRNVLVKNDGACVISDFGLSMRLTGNRLVRPGEEDNAAISEVGTIRYMAPEVLEGAVNLRDCESALKQVDMYALGLIYWEVFMRCTDLFPGESVPDYQMAFQTEVGNHPTFEDMQVLVSREKQRPKFPEAWKENSLAVRSLKETIEDCWDQDAEARLTAQCAEERMAELMMIWERNKSVSPTVNPMSTAMQNERNLSHNRRVPKIGPYPDYSSSSYIEDSIHHTDSIVKNISSEHSMSSTPLTIGEKNRNSINYERQQAQARIPSPETSVTSLSTNTTTTNTTGLTPSTGMTTISEMPYPDETHLHATNVAQSIGPTPVCLQLTEEDLETNKLDPKEVDKNLKESSDENLMEHSLKQFSGPDPLSSTSSSLLYPLIKLAVEVTGQQDFTQAANGQACLIPDVPPAQIYPLPKQQNLPKRPTSLPLNTKNSTKEPRLKFGNKHKSNLKQVETGVAKMNTINAAEPHVVTVTMNGVAGRSHNVNSHAATTQYANGAVPAGQAANIVAHRSQEMLQNQFIGEDTRLNINSSPDEHEPLLRREQQAGHDEGVLDRLVDRRERPLEGGRTNSNNNNSNPCSEQDILTQGVTSTAADPGPSKPRRAQRPNSLDLSATNILDGSSIQIGESTQDGKSGSGEKIKRRVKTPYSLKRWRPSTWVISTEPLDCEVNNNGSDRAVHSKSSTAVYLAEGGTATTTVSKDIGMNCL.

Residues 1–26 form the signal peptide; it reads MTSSLHRPFRVPWLLWAVLLVSTTAA. Topologically, residues 27-150 are extracellular; it reads SQNQERLCAF…PPHSFNRDET (124 aa). Intrachain disulfides connect C34–C66, C60–C84, C94–C117, C99–C116, and C118–C123. The N-linked (GlcNAc...) asparagine glycan is linked to N55. The N-linked (GlcNAc...) asparagine glycan is linked to N110. N126 is a glycosylation site (N-linked (GlcNAc...) asparagine). A helical transmembrane segment spans residues 151-171; that stretch reads IIIALASVSVLAVLIVALCFG. At 172–1038 the chain is on the cytoplasmic side; it reads YRMLTGDRKQ…VSKDIGMNCL (867 aa). In terms of domain architecture, Protein kinase spans 203 to 504; sequence LKLLELIGRG…QCAEERMAEL (302 aa). Residues 209-217, K230, and 280-282 each bind ATP; these read IGRGRYGAV and EYY. D333 serves as the catalytic Proton acceptor. Residues 337-338 and D351 contribute to the ATP site; that span reads RN. T379 bears the Phosphothreonine mark. S586 carries the phosphoserine modification. Residues 593-626 are disordered; the sequence is QAQARIPSPETSVTSLSTNTTTTNTTGLTPSTGM. Residues 603-626 show a composition bias toward low complexity; that stretch reads TSVTSLSTNTTTTNTTGLTPSTGM. 2 positions are modified to phosphoserine: S680 and S681. The tract at residues 746–769 is disordered; the sequence is PKQQNLPKRPTSLPLNTKNSTKEP. S843 bears the Phosphoserine mark. Basic and acidic residues predominate over residues 872–896; sequence RREQQAGHDEGVLDRLVDRRERPLE. Residues 872 to 974 form a disordered region; sequence RREQQAGHDE…SGSGEKIKRR (103 aa). Polar residues-rich tracts occupy residues 909-924 and 937-964; these read PCSE…TSTA and RPNS…QDGK.

The protein belongs to the protein kinase superfamily. TKL Ser/Thr protein kinase family. TGFB receptor subfamily. As to quaternary structure, interacts with GDF5. Interacts with BMP4. Interacts with SCUBE3. Interacts with TSC22D1/TSC-22. Interacts with activin A/INHBA. The cofactor is Mg(2+). Mn(2+) is required as a cofactor.

The protein resides in the cell membrane. The catalysed reaction is L-threonyl-[receptor-protein] + ATP = O-phospho-L-threonyl-[receptor-protein] + ADP + H(+). The enzyme catalyses L-seryl-[receptor-protein] + ATP = O-phospho-L-seryl-[receptor-protein] + ADP + H(+). In terms of biological role, on ligand binding, forms a receptor complex consisting of two type II and two type I transmembrane serine/threonine kinases. Type II receptors phosphorylate and activate type I receptors which autophosphorylate, then bind and activate SMAD transcriptional regulators. Can also mediate signaling through the activation of the p38MAPK cascade. Binds to BMP7, BMP2 and, less efficiently, BMP4. Binding is weak but enhanced by the presence of type I receptors for BMPs. Mediates induction of adipogenesis by GDF6. Promotes signaling also by binding to activin A/INHBA. In Mus musculus (Mouse), this protein is Bone morphogenetic protein receptor type-2 (Bmpr2).